The primary structure comprises 311 residues: Dermonecrotic toxin (311 aa).

The N-terminal stretch at 1 to 21 (MYVHLALILGCWTVVLQGAET) is a signal peptide. The propeptide occupies 22 to 26 (DVGER). His-38 is a catalytic residue. 2 residues coordinate Mg(2+): Glu-58 and Asp-60. His-73 acts as the Nucleophile in catalysis. Cysteines 77 and 83 form a disulfide. Asp-117 contacts Mg(2+).

This sequence belongs to the arthropod phospholipase D family. Class I subfamily. It depends on Mg(2+) as a cofactor. As to expression, expressed by the venom gland.

It is found in the secreted. It catalyses the reaction an N-(acyl)-sphingosylphosphocholine = an N-(acyl)-sphingosyl-1,3-cyclic phosphate + choline. The catalysed reaction is an N-(acyl)-sphingosylphosphoethanolamine = an N-(acyl)-sphingosyl-1,3-cyclic phosphate + ethanolamine. It carries out the reaction a 1-acyl-sn-glycero-3-phosphocholine = a 1-acyl-sn-glycero-2,3-cyclic phosphate + choline. The enzyme catalyses a 1-acyl-sn-glycero-3-phosphoethanolamine = a 1-acyl-sn-glycero-2,3-cyclic phosphate + ethanolamine. Its activity is regulated as follows. Catalytic activity and hemolysis are inhibited by divalent ion chelators (1,10-phenanthroline, EDTA, and EGTA). Dermonecrotic toxins cleave the phosphodiester linkage between the phosphate and headgroup of certain phospholipids (sphingolipid and lysolipid substrates), forming an alcohol (often choline) and a cyclic phosphate. This toxin acts on sphingomyelin (SM). It may also act on ceramide phosphoethanolamine (CPE), lysophosphatidylcholine (LPC) and lysophosphatidylethanolamine (LPE), but not on lysophosphatidylserine (LPS), and lysophosphatidylglycerol (LPG). It acts by transphosphatidylation, releasing exclusively cyclic phosphate products as second products. Shows complement-dependent hemolysis. Also induces dermonecrosis, vascular permeability, edema, inflammatory response, and platelet aggregation. The chain is Dermonecrotic toxin from Loxosceles laeta (South American recluse spider).